The sequence spans 183 residues: Adenine phosphoribosyltransferase (183 aa).

The protein belongs to the purine/pyrimidine phosphoribosyltransferase family. Homodimer.

It is found in the cytoplasm. It carries out the reaction AMP + diphosphate = 5-phospho-alpha-D-ribose 1-diphosphate + adenine. It functions in the pathway purine metabolism; AMP biosynthesis via salvage pathway; AMP from adenine: step 1/1. Functionally, catalyzes a salvage reaction resulting in the formation of AMP, that is energically less costly than de novo synthesis. This is Adenine phosphoribosyltransferase from Salmonella arizonae (strain ATCC BAA-731 / CDC346-86 / RSK2980).